Here is a 495-residue protein sequence, read N- to C-terminus: Cobyric acid synthase (495 aa).

Positions 252-439 (RIRIAAPMLS…VHGLFAQDAF (188 aa)) constitute a GATase cobBQ-type domain. Cys334 serves as the catalytic Nucleophile. His431 is an active-site residue.

It belongs to the CobB/CobQ family. CobQ subfamily.

The protein operates within cofactor biosynthesis; adenosylcobalamin biosynthesis. In terms of biological role, catalyzes amidations at positions B, D, E, and G on adenosylcobyrinic A,C-diamide. NH(2) groups are provided by glutamine, and one molecule of ATP is hydrogenolyzed for each amidation. This chain is Cobyric acid synthase, found in Hyphomonas neptunium (strain ATCC 15444).